The following is a 356-amino-acid chain: tRNA N6-adenosine threonylcarbamoyltransferase (356 aa).

Residues His115 and His119 each coordinate Fe cation. Substrate is bound by residues Leu137–Gly141, Asp170, Gly183, and Asn280. Asp308 is a Fe cation binding site.

Belongs to the KAE1 / TsaD family. It depends on Fe(2+) as a cofactor.

Its subcellular location is the cytoplasm. The catalysed reaction is L-threonylcarbamoyladenylate + adenosine(37) in tRNA = N(6)-L-threonylcarbamoyladenosine(37) in tRNA + AMP + H(+). In terms of biological role, required for the formation of a threonylcarbamoyl group on adenosine at position 37 (t(6)A37) in tRNAs that read codons beginning with adenine. Is involved in the transfer of the threonylcarbamoyl moiety of threonylcarbamoyl-AMP (TC-AMP) to the N6 group of A37, together with TsaE and TsaB. TsaD likely plays a direct catalytic role in this reaction. The sequence is that of tRNA N6-adenosine threonylcarbamoyltransferase from Paracoccus denitrificans (strain Pd 1222).